Here is a 316-residue protein sequence, read N- to C-terminus: Protein lifeguard 2 (316 aa).

The interval 1-53 (MTQGKLSVANKAPGTEGQQQVHGEKKEAPAVPSAPPSYEEATSGEGMKAGAFP) is disordered. The next 3 membrane-spanning stretches (helical) occupy residues 106 to 126 (VYTILLIQLLVTLAVVALFTF), 138 to 158 (PGWYWASYAVFFATYLTLACC), and 165 to 185 (FPWNLILLTVFTLSMAYLTGM). Asparagine 191 carries an N-linked (GlcNAc...) asparagine glycan. A run of 4 helical transmembrane segments spans residues 194-214 (SVLLCLGITALVCLSVTVFSF), 225-245 (GVLFVLPMTLFFSGLILAILL), 250-270 (VPWLHAVYAALGAGVFTLFLA), and 290-310 (IFGALNIYLDIIYIFTFFLQL).

The protein belongs to the BI1 family. LFG subfamily. Interacts with FAS/TNFRSF6 and BAX.

The protein localises to the cell membrane. The protein resides in the membrane raft. It is found in the postsynaptic cell membrane. Antiapoptotic protein which protects cells uniquely from Fas-induced apoptosis. Regulates Fas-mediated apoptosis in neurons by interfering with caspase-8 activation. Plays a role in cerebellar development by affecting cerebellar size, internal granular layer (IGL) thickness, and Purkinje cell (PC) development. This is Protein lifeguard 2 (FAIM2) from Pongo abelii (Sumatran orangutan).